The chain runs to 244 residues: Centromere protein H (244 aa).

At Met-1 the chain carries N-acetylmethionine. Residues 1–33 (METQSEEQAVTKPADSGGEGGPPQVAGAQAARP) form a disordered region. The residue at position 16 (Ser-16) is a Phosphoserine. The segment covering 22 to 31 (PPQVAGAQAA) has biased composition (low complexity). A Glycyl lysine isopeptide (Lys-Gly) (interchain with G-Cter in SUMO2) cross-link involves residue Lys-64. Thr-65 carries the phosphothreonine modification. Coiled coils occupy residues 66-104 (PEQIMQEKQIEAKIEELENEVEEAKTAFEMKKLALDRMQ) and 146-189 (DLEE…MENS).

It belongs to the CENP-H/MCM16 family. Self-associates. Component of the CENPA-NAC complex, at least composed of CENPA, CENPC, CENPH, CENPM, CENPN, CENPT and CENPU. The CENPA-NAC complex interacts with the CENPA-CAD complex, composed of CENPI, CENPK, CENPL, CENPO, CENPP, CENPQ, CENPR and CENPS. Interacts with KIF2C and NDC80.

The protein localises to the nucleus. Its subcellular location is the chromosome. It is found in the centromere. It localises to the kinetochore. Functionally, component of the CENPA-NAC (nucleosome-associated) complex, a complex that plays a central role in assembly of kinetochore proteins, mitotic progression and chromosome segregation. The CENPA-NAC complex recruits the CENPA-CAD (nucleosome distal) complex and may be involved in incorporation of newly synthesized CENPA into centromeres. This chain is Centromere protein H (CENPH), found in Bos taurus (Bovine).